The following is a 484-amino-acid chain: Cobyric acid synthase (484 aa).

Positions 249-438 (QLRVAVPVFT…LHGIFDRPET (190 aa)) constitute a GATase cobBQ-type domain. C330 functions as the Nucleophile in the catalytic mechanism. H430 is an active-site residue.

This sequence belongs to the CobB/CobQ family. CobQ subfamily.

Its pathway is cofactor biosynthesis; adenosylcobalamin biosynthesis. Catalyzes amidations at positions B, D, E, and G on adenosylcobyrinic A,C-diamide. NH(2) groups are provided by glutamine, and one molecule of ATP is hydrogenolyzed for each amidation. The polypeptide is Cobyric acid synthase (Vibrio cholerae serotype O1 (strain ATCC 39315 / El Tor Inaba N16961)).